Here is a 340-residue protein sequence, read N- to C-terminus: uncharacterized protein (340 aa).

The RING-CH-type zinc finger occupies 6–70; sequence KYEKSSARCW…PQCLTAYRIA (65 aa). Zn(2+) contacts are provided by Cys-14, Cys-17, Cys-37, Cys-39, His-44, Cys-47, Cys-60, and Cys-63. 3 helical membrane passes run 249-269, 274-294, and 300-320; these read EFWI…TKIL, PILL…GNFT, and IIGA…FIAW.

The protein localises to the membrane. This is an uncharacterized protein from Schizosaccharomyces pombe (strain 972 / ATCC 24843) (Fission yeast).